Reading from the N-terminus, the 335-residue chain is NADH-quinone oxidoreductase subunit H (335 aa).

8 helical membrane passes run 11–31 (VILT…CGAL), 81–101 (VIFT…FVVI), 114–134 (IGLL…LFAG), 154–174 (VSYE…VGSF), 187–207 (LWFI…GVAV), 238–258 (FFVG…TLFF), 270–290 (QLSF…FILL), and 307–327 (WKFC…IVLY).

This sequence belongs to the complex I subunit 1 family. As to quaternary structure, NDH-1 is composed of 13 different subunits. Subunits NuoA, H, J, K, L, M, N constitute the membrane sector of the complex.

The protein localises to the cell inner membrane. The catalysed reaction is a quinone + NADH + 5 H(+)(in) = a quinol + NAD(+) + 4 H(+)(out). In terms of biological role, NDH-1 shuttles electrons from NADH, via FMN and iron-sulfur (Fe-S) centers, to quinones in the respiratory chain. The immediate electron acceptor for the enzyme in this species is believed to be ubiquinone. Couples the redox reaction to proton translocation (for every two electrons transferred, four hydrogen ions are translocated across the cytoplasmic membrane), and thus conserves the redox energy in a proton gradient. This subunit may bind ubiquinone. The chain is NADH-quinone oxidoreductase subunit H from Pseudomonas putida (strain ATCC 700007 / DSM 6899 / JCM 31910 / BCRC 17059 / LMG 24140 / F1).